Consider the following 265-residue polypeptide: Shikimate dehydrogenase (NADP(+)) (265 aa).

Shikimate-binding positions include 14 to 16 (SLS) and T61. The active-site Proton acceptor is the K65. Shikimate-binding residues include N85 and D100. Residues 123–127 (GAGGA), 146–151 (NRTESK), and A209 each bind NADP(+). Shikimate is bound at residue Y211. An NADP(+)-binding site is contributed by G232.

This sequence belongs to the shikimate dehydrogenase family. As to quaternary structure, homodimer.

The enzyme catalyses shikimate + NADP(+) = 3-dehydroshikimate + NADPH + H(+). The protein operates within metabolic intermediate biosynthesis; chorismate biosynthesis; chorismate from D-erythrose 4-phosphate and phosphoenolpyruvate: step 4/7. Functionally, involved in the biosynthesis of the chorismate, which leads to the biosynthesis of aromatic amino acids. Catalyzes the reversible NADPH linked reduction of 3-dehydroshikimate (DHSA) to yield shikimate (SA). The polypeptide is Shikimate dehydrogenase (NADP(+)) (Haloarcula marismortui (strain ATCC 43049 / DSM 3752 / JCM 8966 / VKM B-1809) (Halobacterium marismortui)).